The following is a 927-amino-acid chain: Translation initiation factor IF-2 (927 aa).

A disordered region spans residues 27–338 (LGLPVKSHAS…APKPVTERKF (312 aa)). Residues 49–69 (SFSSSKTKAPTNSVQTNQGVK) are compositionally biased toward polar residues. 2 stretches are compositionally biased toward basic and acidic residues: residues 70–86 (TESK…DDKP) and 101–138 (FKAE…DRRH). A compositionally biased stretch (low complexity) spans 146–159 (GNRNDNRQGQQNNR). 3 stretches are compositionally biased toward basic and acidic residues: residues 160–171 (NKNDGRYADHKQ), 202–226 (YSRH…EQEL), and 234–257 (AQEE…KEIV). The span at 300–316 (NWNNQNQVRNQRNSNWN) shows a compositional bias: low complexity. The 170-residue stretch at 428-597 (ERPPVVTIMG…LLVAEMEELK (170 aa)) folds into the tr-type G domain. A G1 region spans residues 437 to 444 (GHVDHGKT). 437–444 (GHVDHGKT) contacts GTP. Residues 462 to 466 (GITQH) are G2. The tract at residues 483–486 (DTPG) is G3. Residues 483 to 487 (DTPGH) and 537 to 540 (NKID) each bind GTP. The interval 537-540 (NKID) is G4. Residues 573–575 (SAK) are G5.

It belongs to the TRAFAC class translation factor GTPase superfamily. Classic translation factor GTPase family. IF-2 subfamily.

It localises to the cytoplasm. One of the essential components for the initiation of protein synthesis. Protects formylmethionyl-tRNA from spontaneous hydrolysis and promotes its binding to the 30S ribosomal subunits. Also involved in the hydrolysis of GTP during the formation of the 70S ribosomal complex. The protein is Translation initiation factor IF-2 of Streptococcus agalactiae serotype Ia (strain ATCC 27591 / A909 / CDC SS700).